Here is a 75-residue protein sequence, read N- to C-terminus: Small ribosomal subunit protein bS18 (75 aa).

This sequence belongs to the bacterial ribosomal protein bS18 family. As to quaternary structure, part of the 30S ribosomal subunit. Forms a tight heterodimer with protein bS6.

Functionally, binds as a heterodimer with protein bS6 to the central domain of the 16S rRNA, where it helps stabilize the platform of the 30S subunit. The protein is Small ribosomal subunit protein bS18 of Legionella pneumophila (strain Paris).